The following is a 67-amino-acid chain: Beta-defensin 103A (67 aa).

The N-terminal stretch at 1–22 is a signal peptide; that stretch reads MRIHYLLFTLLFLFLVPVPGHG. 3 disulfides stabilise this stretch: Cys33/Cys62, Cys40/Cys55, and Cys45/Cys63.

It belongs to the beta-defensin family.

It localises to the secreted. Its function is as follows. Exhibits antimicrobial activity against Gram-positive and Gram-negative bacteria. The sequence is that of Beta-defensin 103A (DEFB103A) from Gorilla gorilla gorilla (Western lowland gorilla).